Reading from the N-terminus, the 341-residue chain is Holliday junction branch migration complex subunit RuvB (341 aa).

Positions M1–Y180 are large ATPase domain (RuvB-L). ATP is bound by residues L19, R20, G61, K64, T65, T66, R170, Y180, and R217. A Mg(2+)-binding site is contributed by T65. Positions N181–G251 are small ATPAse domain (RuvB-S). The interval D254 to F341 is head domain (RuvB-H). DNA contacts are provided by R309 and R314.

This sequence belongs to the RuvB family. Homohexamer. Forms an RuvA(8)-RuvB(12)-Holliday junction (HJ) complex. HJ DNA is sandwiched between 2 RuvA tetramers; dsDNA enters through RuvA and exits via RuvB. An RuvB hexamer assembles on each DNA strand where it exits the tetramer. Each RuvB hexamer is contacted by two RuvA subunits (via domain III) on 2 adjacent RuvB subunits; this complex drives branch migration. In the full resolvosome a probable DNA-RuvA(4)-RuvB(12)-RuvC(2) complex forms which resolves the HJ.

Its subcellular location is the cytoplasm. The catalysed reaction is ATP + H2O = ADP + phosphate + H(+). Its function is as follows. The RuvA-RuvB-RuvC complex processes Holliday junction (HJ) DNA during genetic recombination and DNA repair, while the RuvA-RuvB complex plays an important role in the rescue of blocked DNA replication forks via replication fork reversal (RFR). RuvA specifically binds to HJ cruciform DNA, conferring on it an open structure. The RuvB hexamer acts as an ATP-dependent pump, pulling dsDNA into and through the RuvAB complex. RuvB forms 2 homohexamers on either side of HJ DNA bound by 1 or 2 RuvA tetramers; 4 subunits per hexamer contact DNA at a time. Coordinated motions by a converter formed by DNA-disengaged RuvB subunits stimulates ATP hydrolysis and nucleotide exchange. Immobilization of the converter enables RuvB to convert the ATP-contained energy into a lever motion, pulling 2 nucleotides of DNA out of the RuvA tetramer per ATP hydrolyzed, thus driving DNA branch migration. The RuvB motors rotate together with the DNA substrate, which together with the progressing nucleotide cycle form the mechanistic basis for DNA recombination by continuous HJ branch migration. Branch migration allows RuvC to scan DNA until it finds its consensus sequence, where it cleaves and resolves cruciform DNA. The polypeptide is Holliday junction branch migration complex subunit RuvB (Leptospira borgpetersenii serovar Hardjo-bovis (strain L550)).